The following is a 577-amino-acid chain: Arginine--tRNA ligase (577 aa).

A 'HIGH' region motif is present at residues 122–132; the sequence is PNVAKEMHVGH.

It belongs to the class-I aminoacyl-tRNA synthetase family. Monomer.

It is found in the cytoplasm. The enzyme catalyses tRNA(Arg) + L-arginine + ATP = L-arginyl-tRNA(Arg) + AMP + diphosphate. The polypeptide is Arginine--tRNA ligase (Escherichia coli (strain K12 / MC4100 / BW2952)).